The sequence spans 504 residues: uncharacterized protein (504 aa).

A disordered region spans residues 431-483 (GEAEKYRKLQDGDEDEEGTGKPEPKKARRKGFGGKFAPKHEEKVTRAVGVNSE).

Belongs to the CBF/MAK21 family.

This is an uncharacterized protein from Caenorhabditis elegans.